Reading from the N-terminus, the 255-residue chain is UPF0246 protein CC_3385 (255 aa).

This sequence belongs to the UPF0246 family.

The polypeptide is UPF0246 protein CC_3385 (Caulobacter vibrioides (strain ATCC 19089 / CIP 103742 / CB 15) (Caulobacter crescentus)).